A 256-amino-acid chain; its full sequence is 5-keto-4-deoxy-D-glucarate aldolase (256 aa).

His-50 functions as the Proton acceptor in the catalytic mechanism. A substrate-binding site is contributed by Gln-151. A Mg(2+)-binding site is contributed by Glu-153. Substrate is bound by residues Ser-178 and Asp-179. A Mg(2+)-binding site is contributed by Asp-179.

The protein belongs to the HpcH/HpaI aldolase family. KDGluc aldolase subfamily. As to quaternary structure, homohexamer; trimer of dimers. Mg(2+) is required as a cofactor.

It catalyses the reaction 5-dehydro-4-deoxy-D-glucarate = 2-hydroxy-3-oxopropanoate + pyruvate. The enzyme catalyses 2-dehydro-3-deoxy-D-glucarate = 2-hydroxy-3-oxopropanoate + pyruvate. Its pathway is carbohydrate acid metabolism; galactarate degradation; D-glycerate from galactarate: step 2/3. Its function is as follows. Catalyzes the reversible retro-aldol cleavage of both 5-keto-4-deoxy-D-glucarate and 2-keto-3-deoxy-D-glucarate to pyruvate and tartronic semialdehyde. The polypeptide is 5-keto-4-deoxy-D-glucarate aldolase (Escherichia fergusonii (strain ATCC 35469 / DSM 13698 / CCUG 18766 / IAM 14443 / JCM 21226 / LMG 7866 / NBRC 102419 / NCTC 12128 / CDC 0568-73)).